The sequence spans 373 residues: Histidinol-phosphate aminotransferase (373 aa).

Position 233 is an N6-(pyridoxal phosphate)lysine (K233).

This sequence belongs to the class-II pyridoxal-phosphate-dependent aminotransferase family. Histidinol-phosphate aminotransferase subfamily. Homodimer. Requires pyridoxal 5'-phosphate as cofactor.

It carries out the reaction L-histidinol phosphate + 2-oxoglutarate = 3-(imidazol-4-yl)-2-oxopropyl phosphate + L-glutamate. It functions in the pathway amino-acid biosynthesis; L-histidine biosynthesis; L-histidine from 5-phospho-alpha-D-ribose 1-diphosphate: step 7/9. The polypeptide is Histidinol-phosphate aminotransferase (Nitratidesulfovibrio vulgaris (strain ATCC 29579 / DSM 644 / CCUG 34227 / NCIMB 8303 / VKM B-1760 / Hildenborough) (Desulfovibrio vulgaris)).